A 512-amino-acid chain; its full sequence is GMP synthase [glutamine-hydrolyzing] (512 aa).

Residues 7-197 (TIIVLDFGSQ…VFGVCGCSEG (191 aa)) enclose the Glutamine amidotransferase type-1 domain. The active-site Nucleophile is Cys84. Residues His171 and Glu173 contribute to the active site. The region spanning 198–387 (WNMENFIEVE…LGIPDEIVWR (190 aa)) is the GMPS ATP-PPase domain. 225-231 (SGGVDSS) is an ATP binding site.

In terms of assembly, homodimer.

The enzyme catalyses XMP + L-glutamine + ATP + H2O = GMP + L-glutamate + AMP + diphosphate + 2 H(+). It participates in purine metabolism; GMP biosynthesis; GMP from XMP (L-Gln route): step 1/1. Functionally, catalyzes the synthesis of GMP from XMP. The polypeptide is GMP synthase [glutamine-hydrolyzing] (Bacillus cereus (strain G9842)).